The sequence spans 1214 residues: SWI/SNF complex subunit SMARCC2 (1214 aa).

Positions 1–274 (MAVRKKDGGP…PVSRRKKISA (274 aa)) are marR-like, BRCT and chromo domains module. One can recognise a MarR-like domain in the interval 10–136 (PNVKYYEAAD…IEKSLVQNNC (127 aa)). Residues 140–183 (PNIFLCPEIEPKLLGKLKDIIKRHQGTVTEDKNNASHVVYPVPG) enclose the BRCT; N-terminus domain. A Chromo domain is found at 189–217 (EWVRPVMKRDKQVLLHWGYYPDSYDTWIP). The BRCT; C-terminus domain maps to 233 to 257 (KPRKVHAKWILDTDTFNEWMNEEDY). The interval 257–413 (YEVNDDKNPV…GEQTKNPDLH (157 aa)) is disordered. Positions 275-284 (KTLTDEVNSP) are enriched in polar residues. Serine 283, serine 286, serine 302, serine 304, and serine 306 each carry phosphoserine. An N6-(ADP-ribosyl)lysine modification is found at lysine 312. An N6-acetyllysine modification is found at lysine 326. Basic and acidic residues predominate over residues 331 to 344 (HREEEQEDLTKDMD). Serine 347 and serine 387 each carry phosphoserine. The segment covering 379–398 (DLDEQEDESMETTGKDEDEN) has biased composition (acidic residues). The region spanning 424 to 521 (IIIPSYAAWF…YQVDAESRPT (98 aa)) is the SWIRM domain. A Phosphothreonine modification is found at threonine 548. Residues lysine 564, lysine 566, lysine 568, and lysine 592 each participate in a glycyl lysine isopeptide (Lys-Gly) (interchain with G-Cter in SUMO2) cross-link. The region spanning 596-647 (SATREWTEQETLLLLEALEMYKDDWNKVSEHVGSRTQDECILHFLRLPIEDP) is the SANT domain. A Glycyl lysine isopeptide (Lys-Gly) (interchain with G-Cter in SUMO2) cross-link involves residue lysine 704. A disordered region spans residues 724 to 852 (KVTGKADPAF…GERKTKVERD (129 aa)). Basic and acidic residues-rich tracts occupy residues 747-777 (EPER…EPRE) and 784-852 (EEAK…VERD). A Glycyl lysine isopeptide (Lys-Gly) (interchain with G-Cter in SUMO2) cross-link involves residue lysine 787. Serine 813 bears the Phosphoserine mark. Lysine 848 participates in a covalent cross-link: Glycyl lysine isopeptide (Lys-Gly) (interchain with G-Cter in SUMO2). Residues 907 to 934 (EELETIMDREREALEYQRQQLLADRQAF) are a coiled coil. 3 disordered regions span residues 947-983 (RQQH…PPAV), 997-1092 (PAGS…PPPP), and 1182-1214 (LPSA…PPPQ). The segment covering 949 to 959 (QHFQQMHQQQQ) has biased composition (low complexity). A compositionally biased stretch (pro residues) spans 960–974 (QPPPALPPGSQPIPP). A compositionally biased stretch (low complexity) spans 997 to 1033 (PAGSGAPPGSLGPSEQIGQAGSTAGPQQQQPAGAPQP). Pro residues-rich tracts occupy residues 1034-1051 (GAVP…PSPF) and 1186-1202 (SPLP…PTAP).

Belongs to the SMARCC family. Component of the multiprotein chromatin-remodeling complexes SWI/SNF: SWI/SNF-A (BAF), SWI/SNF-B (PBAF) and related complexes. The canonical complex contains a catalytic subunit (either SMARCA4/BRG1/BAF190A or SMARCA2/BRM/BAF190B) and at least SMARCE1, ACTL6A/BAF53, SMARCC1/BAF155, SMARCC2/BAF170, and SMARCB1/SNF5/BAF47. Other subunits specific to each of the complexes may also be present permitting several possible combinations developmentally and tissue specific. Component of the BAF complex, which includes at least actin (ACTB), ARID1A/BAF250A, ARID1B/BAF250B, SMARCA2/BRM, SMARCA4/BRG1, ACTL6A/BAF53, ACTL6B/BAF53B, SMARCE1/BAF57, SMARCC1/BAF155, SMARCC2/BAF170, SMARCB1/SNF5/INI1, and one or more SMARCD1/BAF60A, SMARCD2/BAF60B, or SMARCD3/BAF60C. In muscle cells, the BAF complex also contains DPF3. Component of neural progenitors-specific chromatin remodeling complex (npBAF complex) composed of at least, ARID1A/BAF250A or ARID1B/BAF250B, SMARCD1/BAF60A, SMARCD3/BAF60C, SMARCA2/BRM/BAF190B, SMARCA4/BRG1/BAF190A, SMARCB1/BAF47, SMARCC1/BAF155, SMARCE1/BAF57, SMARCC2/BAF170, PHF10/BAF45A, ACTL6A/BAF53A and actin. Component of neuron-specific chromatin remodeling complex (nBAF complex) composed of at least, ARID1A/BAF250A or ARID1B/BAF250B, SMARCD1/BAF60A, SMARCD3/BAF60C, SMARCA2/BRM/BAF190B, SMARCA4/BRG1/BAF190A, SMARCB1/BAF47, SMARCC1/BAF155, SMARCE1/BAF57, SMARCC2/BAF170, DPF1/BAF45B, DPF3/BAF45C, ACTL6B/BAF53B and actin. Component of the SWI/SNF-B (PBAF) chromatin remodeling complex, at least composed of SMARCA4/BRG1, SMARCB1/BAF47/SNF5, ACTL6A/BAF53A or ACTL6B/BAF53B, SMARCE1/BAF57, SMARCD1/BAF60A, SMARCD2/BAF60B, perhaps SMARCD3/BAF60C, SMARCC1/BAF155, SMARCC2/BAF170, PBRM1/BAF180, ARID2/BAF200 and actin. May also interact with the SIN3A histone deacetylase transcription repressor complex in conjunction with SMARCA2 and SMARCA4. Interacts with SMARD1. Interacts with KDM6B. Interaction with RCOR1. Interacts with DPF2. Interacts with ERCC6. Interacts with FOS. In terms of processing, mono-ADP-ribosylation at Lys-312 by SIRT6 promotes recruitment to the enhancer region of the Heme oxygenase-1 (HO-1) locus, leading to transcription activation of the locus. As to expression, ubiquitously expressed.

The protein resides in the nucleus. Its function is as follows. Involved in transcriptional activation and repression of select genes by chromatin remodeling (alteration of DNA-nucleosome topology). Component of SWI/SNF chromatin remodeling complexes that carry out key enzymatic activities, changing chromatin structure by altering DNA-histone contacts within a nucleosome in an ATP-dependent manner. Can stimulate the ATPase activity of the catalytic subunit of these complexes. May be required for CoREST dependent repression of neuronal specific gene promoters in non-neuronal cells. Belongs to the neural progenitors-specific chromatin remodeling complex (npBAF complex) and the neuron-specific chromatin remodeling complex (nBAF complex). During neural development a switch from a stem/progenitor to a postmitotic chromatin remodeling mechanism occurs as neurons exit the cell cycle and become committed to their adult state. The transition from proliferating neural stem/progenitor cells to postmitotic neurons requires a switch in subunit composition of the npBAF and nBAF complexes. As neural progenitors exit mitosis and differentiate into neurons, npBAF complexes which contain ACTL6A/BAF53A and PHF10/BAF45A, are exchanged for homologous alternative ACTL6B/BAF53B and DPF1/BAF45B or DPF3/BAF45C subunits in neuron-specific complexes (nBAF). The npBAF complex is essential for the self-renewal/proliferative capacity of the multipotent neural stem cells. The nBAF complex along with CREST plays a role regulating the activity of genes essential for dendrite growth. Critical regulator of myeloid differentiation, controlling granulocytopoiesis and the expression of genes involved in neutrophil granule formation. This Homo sapiens (Human) protein is SWI/SNF complex subunit SMARCC2 (SMARCC2).